Consider the following 316-residue polypeptide: Triplex capsid protein 2 (316 aa).

Belongs to the herpesviridae TRX2 protein family. Interacts with TRX1 and major capisd protein/MCP.

It is found in the virion. Its subcellular location is the host nucleus. Its function is as follows. Structural component of the T=16 icosahedral capsid. The capsid is composed of pentamers and hexamers of major capsid protein/MCP, which are linked together by heterotrimers called triplexes. These triplexes are formed by a single molecule of triplex protein 1/TRX1 and two copies of triplex protein 2/TRX2. Additionally, TRX1 is required for efficient transport of TRX2 to the nucleus, which is the site of capsid assembly. This chain is Triplex capsid protein 2, found in Homo sapiens (Human).